The chain runs to 724 residues: MAQVQQVPSSPMNGIPEKNGNGLSIEESASTAVAALAHIQNGAVLFHGTPTKDLNGASTSIDTDDLQLSPSDLRRRSTRASALKAQEKIKLKDDIVQGPQKRANDDDDMEDEELGDEINEQSAPKKRRLENGKEFDQTCFRFGLRANNEGEVYAMTDESENSSIHESEMEVVRYHYEKMKNKEPDEEQLRERLNMRREAENQLREEEAKLLVLRKMKDSQTRAITKLAAETKAADLAEATSAAYKPAVATNGKSVTNGKNSMIESNNKTMNGLKNLSIPQQLELLQKLSSQSPAAKQAYIMAKKNPAQTTQLFQQLITINNQNLQKQKELSAAETNASASASPAVQQSQQAQQPQQAQITQSKLLNQQTPAQRIQAARLAFRAQADKQLTTIPTQKSQPHDITFLPNPNASAFLALHGLDLVVQHVLKDRSNETPYAGPSYECEECKTECAHTWKAIGSTQDDLHLYCENCVRSAQKRKNRTDQTALLKRAFQKITAQEKLLQEFEKKIAEGQLEQYAEAKAAAPATSQTIPTSSTATVSSIPLVPRLPQIPSSTGSSTPTQAVKTSTPIHSTPKSSSSSAKKTAAQLQQQSMQGMNQLFSTAMLRNNPQMQQMLQMYQALAMGGGAANMANNQMAMLFQAQAMQAAQAQVARAQAAKAQAAQAQAAQAQAQAQANREANQQSMLIQALMSNGQVNVQALQQLQKLTPEQQKALIEVVKRQTRK.

2 stretches are compositionally biased toward polar residues: residues 1 to 12 (MAQVQQVPSSPM) and 56 to 70 (GASTSIDTDDLQLSP). Disordered regions lie at residues 1–23 (MAQVQQVPSSPMNGIPEKNGNGL) and 55–129 (NGAS…KRRL). The span at 85-95 (AQEKIKLKDDI) shows a compositional bias: basic and acidic residues. Acidic residues predominate over residues 105 to 119 (DDDDMEDEELGDEIN). The stretch at 186–216 (EEQLRERLNMRREAENQLREEEAKLLVLRKM) forms a coiled coil. Disordered stretches follow at residues 328 to 361 (KELSAAETNASASASPAVQQSQQAQQPQQAQITQ) and 523 to 590 (AAPA…QLQQ). Residues 332 to 358 (AAETNASASASPAVQQSQQAQQPQQAQ) show a composition bias toward low complexity. Composition is skewed to polar residues over residues 527 to 541 (TSQTIPTSSTATVSS) and 551 to 564 (IPSSTGSSTPTQAV). Residues 565 to 590 (KTSTPIHSTPKSSSSSAKKTAAQLQQ) show a composition bias toward low complexity.

As to expression, expressed at low levels in excretory cell, pharynx, vulva, and posterior neurons in adults. Strongly expressed in the excretory cell and more weakly in the pharynx in larva. Embryonic expression in the excretory cell.

The protein resides in the nucleus. Functionally, transcription factor which binds to the 5'-CCATACATTA-3' motif found in the promoter region of pgp-12 and activates its expression in the excretory cell. In Caenorhabditis elegans, this protein is Transcription factor dcp-66.